We begin with the raw amino-acid sequence, 604 residues long: Putative O-acetyltransferase SAV0974 (604 aa).

11 helical membrane-spanning segments follow: residues tyrosine 15–leucine 35, glycine 43–leucine 63, leucine 85–serine 105, alanine 150–isoleucine 170, isoleucine 176–serine 196, leucine 212–asparagine 232, tyrosine 240–isoleucine 260, isoleucine 267–valine 287, tyrosine 310–glycine 330, isoleucine 332–tyrosine 352, and phenylalanine 377–alanine 397. Catalysis depends on residues serine 459, aspartate 581, and histidine 584.

Belongs to the acyltransferase 3 family.

The protein resides in the cell membrane. The protein is Putative O-acetyltransferase SAV0974 of Staphylococcus aureus (strain Mu50 / ATCC 700699).